The sequence spans 454 residues: Lamina-associated polypeptide 2, isoforms beta/gamma (454 aa).

The segment at 1–410 (MPEFLEDPSV…KSEKTKKGRS (410 aa)) is nucleoplasmic. The LEM-like domain occupies 5-48 (LEDPSVLTKDKLKSELVANNVTLPAGEQRKDVYVQLYLQHLTAR). Disordered stretches follow at residues 47–117 (ARNR…ELTN) and 149–265 (LREQ…VETS). A linker region spans residues 49–108 (NRPPLPAGTNSKGPPDFSSDEEREPTPVLGSGAAAAGRSRAAVGRKATKKTDKPRQEDKD). Thr57 is subject to Phosphothreonine. A phosphoserine mark is found at Ser59, Ser66, and Ser67. Thr74 bears the Phosphothreonine mark. Over residues 78–93 (GSGAAAAGRSRAAVGR) the composition is skewed to low complexity. Phosphoserine is present on Ser79. 2 positions are modified to omega-N-methylarginine: Arg86 and Arg88. Residues 97–106 (KKTDKPRQED) show a composition bias toward basic and acidic residues. Positions 107 to 117 (KDDLDVTELTN) are enriched in acidic residues. One can recognise an LEM domain in the interval 109–153 (DLDVTELTNEDLLDQLVKYGVNPGPIVGTTRKLYEKKLLKLREQG). An NAKAP95-binding N region spans residues 138-243 (TRKLYEKKLL…TSGSSKGGPL (106 aa)). Thr154 bears the Phosphothreonine mark. Positions 155–178 (ESRSSTPLPTISSSAENTRQNGSN) are enriched in polar residues. Residues Ser156 and Ser159 each carry the phosphoserine modification. 2 positions are modified to phosphothreonine: Thr160 and Thr164. Ser166, Ser168, Ser177, Ser180, Ser184, and Ser190 each carry phosphoserine. The span at 179–203 (DSDRYSDNEEDSKIELKLEKREPLK) shows a compositional bias: basic and acidic residues. Lys207 is modified (N6-acetyllysine). Thr211 is modified (phosphothreonine). The span at 220–237 (NQSYSQAGITETEWTSGS) shows a compositional bias: polar residues. Phosphoserine occurs at positions 222, 224, 250, 254, 265, 292, and 306. Positions 299 to 371 (TGNFKHASPI…SCRRPIKGAA (73 aa)) are binds lamins B. Residues 300 to 374 (GNFKHASPIL…RPIKGAAGRP (75 aa)) form an NAKAP95-binding C region. At Thr312 the chain carries Phosphothreonine. At Ser315 the chain carries Phosphoserine. At Arg320 the chain carries Citrulline. A phosphoserine mark is found at Ser362, Ser378, and Ser385. Lys389 bears the N6-acetyllysine mark. Lys401 is covalently cross-linked (Glycyl lysine isopeptide (Lys-Gly) (interchain with G-Cter in SUMO2)). At Ser402 the chain carries Phosphoserine. Residues 411 to 434 (IPVWIKILLFVVVAVFLFLVYQAM) traverse the membrane as a helical; Signal-anchor for type II membrane protein segment. At 435–454 (ETNQVNPFSNFLHVDPRKSN) the chain is on the lumenal side.

Belongs to the LEM family. As to quaternary structure, interacts with LMNB1, LMNB2, BANF1, AKAP8L, GMCL and chromosomes. Isoform Zeta interacts with BANF1/BAF and may sequester it in the cytoplasm. Mitosis-specific phosphorylation specifically abolishes its binding to lamin B and chromosomes. Post-translationally, citrullinated by PADI4. Expressed in many tissues. Most abundant in adult thymus and fetal liver.

It localises to the nucleus inner membrane. The protein localises to the cytoplasm. May help direct the assembly of the nuclear lamina and thereby help maintain the structural organization of the nuclear envelope. Possible receptor for attachment of lamin filaments to the inner nuclear membrane. May be involved in the control of initiation of DNA replication through its interaction with NAKAP95. Functionally, thymopoietin (TP) and Thymopentin (TP5) may play a role in T-cell development and function. TP5 is an immunomodulating pentapeptide. This chain is Lamina-associated polypeptide 2, isoforms beta/gamma (TMPO), found in Homo sapiens (Human).